Here is a 277-residue protein sequence, read N- to C-terminus: MALVKVKPTSPGRRAVVKVVNAGLHKGAPYPHLVEKQNRTAGRNNKGQITTRHIGGGHKQHYRIVDFRRNKDGIAARVERLEYDPNRSANLALLCYSDGERRYVIAPKGIVPGMQLMSGADAPIKNGNALPLRNIPVGSIIHCVEMMPGKGAQLARSAGASVQLLAREGDYAQLRLRSGEIRRVHVNCRATIGEVGNEEHNLRAIGKAGAQRWRGIRPTVRGVAMNPIDHPHGGGEGKTAAGRHPVSPWGTPSKGFRTRVNKRTDGMIVRRRYSNKG.

The interval 225 to 277 is disordered; the sequence is MNPIDHPHGGGEGKTAAGRHPVSPWGTPSKGFRTRVNKRTDGMIVRRRYSNKG.

The protein belongs to the universal ribosomal protein uL2 family. As to quaternary structure, part of the 50S ribosomal subunit. Forms a bridge to the 30S subunit in the 70S ribosome.

Functionally, one of the primary rRNA binding proteins. Required for association of the 30S and 50S subunits to form the 70S ribosome, for tRNA binding and peptide bond formation. It has been suggested to have peptidyltransferase activity; this is somewhat controversial. Makes several contacts with the 16S rRNA in the 70S ribosome. In Nitrosospira multiformis (strain ATCC 25196 / NCIMB 11849 / C 71), this protein is Large ribosomal subunit protein uL2.